Consider the following 547-residue polypeptide: MLKRLLKRPSLNLLAWLLLAAFYISICLNIAFFKQVLQALPLDSLHNVLVFLSMPVVAFSVINIVLTLSSFLWLNRPLACLFILVGAAAQYFIMTYGIVIDRSMIANIIDTTPAESYALMTPQMLLTLGFSGVLAALIACWIKIKPATSRLRSVLFRGANILVSVLLILLVAALFYKDYASLFRNNKELVKSLSPSNSIVASWSWYSHQRLANLPLVRIGEDAHRNPLMQNEKRKNLTILIVGETSRAENFSLNGYPRETNPRLAKDNVVYFPNTASCGTATAVSVPCMFSDMPREHYKEELAQHQEGVLDIIQRAGINVLWNDNDGGCKGACDRVPHQNVTALNLPDQCINGECYDEVLFHGLEEYINNLQGDGVIVLHTIGSHGPTYYNRYPPQFRKFTPTCDTNEIQTCTKEQLVNTYDNTLVYVDYIVDKAINLLKEHQDKFTTSLVYLSDHGESLGENGIYLHGLPYAIAPDSQKQVPMLLWLSEDYQKRYQVDQNCLQKQAQTQHYSQDNLFSTLLGLTGVETKYYQAADDILQTCRRVSE.

Residues M1 to P9 lie on the Cytoplasmic side of the membrane. A helical membrane pass occupies residues S10–I30. The Periplasmic portion of the chain corresponds to A31–N47. A helical membrane pass occupies residues V48–L68. Topologically, residues S69–A79 are cytoplasmic. A helical transmembrane segment spans residues C80–I100. The Periplasmic portion of the chain corresponds to D101–Q123. Residues M124–I144 form a helical membrane-spanning segment. The Cytoplasmic segment spans residues K145–V154. Residues L155–F175 traverse the membrane as a helical segment. Residues Y176–E547 are Periplasmic-facing.

The protein belongs to the phosphoethanolamine transferase family. EptA subfamily. Has been isolated as a 91 kDa complex containing ZipA-EptA and an unidentified 24 kDa protein.

Its subcellular location is the cell inner membrane. Catalyzes the addition of a phosphoethanolamine moiety to the lipid A. The phosphoethanolamine modification is required for resistance to polymyxin. In Escherichia coli (strain K12), this protein is Phosphoethanolamine transferase EptA (eptA).